We begin with the raw amino-acid sequence, 249 residues long: Small ribosomal subunit protein uS2 (249 aa).

This sequence belongs to the universal ribosomal protein uS2 family.

This Listeria monocytogenes serovar 1/2a (strain ATCC BAA-679 / EGD-e) protein is Small ribosomal subunit protein uS2.